Here is a 373-residue protein sequence, read N- to C-terminus: Histidinol-phosphate aminotransferase (373 aa).

Polar residues predominate over residues 1–10 (MTGVPGSSIT). The tract at residues 1-45 (MTGVPGSSITLDDLPLRDDLRGKSPYGAPQLSVPVRLNTNENPHP) is disordered. Lys237 carries the N6-(pyridoxal phosphate)lysine modification.

It belongs to the class-II pyridoxal-phosphate-dependent aminotransferase family. Histidinol-phosphate aminotransferase subfamily. In terms of assembly, homodimer. Pyridoxal 5'-phosphate serves as cofactor.

It catalyses the reaction L-histidinol phosphate + 2-oxoglutarate = 3-(imidazol-4-yl)-2-oxopropyl phosphate + L-glutamate. It participates in amino-acid biosynthesis; L-histidine biosynthesis; L-histidine from 5-phospho-alpha-D-ribose 1-diphosphate: step 7/9. The protein is Histidinol-phosphate aminotransferase of Mycolicibacterium vanbaalenii (strain DSM 7251 / JCM 13017 / BCRC 16820 / KCTC 9966 / NRRL B-24157 / PYR-1) (Mycobacterium vanbaalenii).